The sequence spans 80 residues: Small ribosomal subunit protein bS16 (80 aa).

The protein belongs to the bacterial ribosomal protein bS16 family.

The sequence is that of Small ribosomal subunit protein bS16 from Blochmanniella pennsylvanica (strain BPEN).